We begin with the raw amino-acid sequence, 106 residues long: Thioredoxin (106 aa).

The Thioredoxin domain maps to 2–106; it reads SHYIELTEEN…LKEQLNKLLG (105 aa). A disulfide bridge links C30 with C33.

Belongs to the thioredoxin family.

Participates in various redox reactions through the reversible oxidation of its active center dithiol to a disulfide and catalyzes dithiol-disulfide exchange reactions. In Helicobacter pylori (strain J99 / ATCC 700824) (Campylobacter pylori J99), this protein is Thioredoxin (trxA).